We begin with the raw amino-acid sequence, 193 residues long: Putative manganese efflux pump MntP (193 aa).

The next 6 helical transmembrane spans lie at 3–23 (MYAT…ASIC), 41–61 (LIFG…GLYA), 65–85 (IIEW…CRMI), 106–126 (IVLI…GIGL), 133–153 (IVHT…LGML), and 169–189 (IGGL…LELF).

It belongs to the MntP (TC 9.B.29) family.

The protein resides in the cell inner membrane. In terms of biological role, probably functions as a manganese efflux pump. The polypeptide is Putative manganese efflux pump MntP (Photorhabdus laumondii subsp. laumondii (strain DSM 15139 / CIP 105565 / TT01) (Photorhabdus luminescens subsp. laumondii)).